Reading from the N-terminus, the 436-residue chain is Probable mediator of RNA polymerase II transcription subunit 26b (436 aa).

A disordered region spans residues proline 71–aspartate 111. The 76-residue stretch at lysine 139–tryptophan 214 folds into the TFIIS N-terminal domain. Residues histidine 263–aspartate 376 are disordered. 2 stretches are compositionally biased toward basic and acidic residues: residues asparagine 276–proline 290 and threonine 332–methionine 350. Positions glutamate 382–arginine 402 form a coiled coil. Residues glutamate 408 to lysine 436 are disordered. The span at serine 427–lysine 436 shows a compositional bias: polar residues.

Belongs to the Mediator complex subunit 26 family. In terms of assembly, component of the Mediator complex.

It is found in the nucleus. In terms of biological role, component of the Mediator complex, a coactivator involved in the regulated transcription of nearly all RNA polymerase II-dependent genes. Mediator functions as a bridge to convey information from gene-specific regulatory proteins to the basal RNA polymerase II transcription machinery. The Mediator complex, having a compact conformation in its free form, is recruited to promoters by direct interactions with regulatory proteins and serves for the assembly of a functional preinitiation complex with RNA polymerase II and the general transcription factors. May play a role in transcription elongation. This chain is Probable mediator of RNA polymerase II transcription subunit 26b (MED26B), found in Arabidopsis thaliana (Mouse-ear cress).